The primary structure comprises 893 residues: Translation initiation factor IF-2 (893 aa).

Residues 1–266 (MVDTKNPGDK…AKPAPSKQRG (266 aa)) form a disordered region. Positions 59-70 (PADAPTAAAAAP) are enriched in low complexity. Pro residues predominate over residues 71-92 (APAPAPVPSAAPRPAAPPPPSR). Positions 93–104 (PQQSRSQSPSRS) are enriched in low complexity. 2 stretches are compositionally biased toward basic and acidic residues: residues 128–148 (ARVRDEEERRAAEAEVARRNS) and 155–196 (AERE…EAKR). Positions 197–226 (PAAAATPAKSATPAARPTGAPAVRAPGVAA) are enriched in low complexity. The tr-type G domain maps to 389–560 (PRSPVVTVMG…ALQAELLDLK (172 aa)). A G1 region spans residues 398–405 (GHVDHGKT). GTP is bound at residue 398–405 (GHVDHGKT). Residues 423-427 (GITQH) form a G2 region. A G3 region spans residues 446 to 449 (DTPG). GTP contacts are provided by residues 446–450 (DTPGH) and 500–503 (NKID). The G4 stretch occupies residues 500-503 (NKID). The interval 536–538 (SAK) is G5.

This sequence belongs to the TRAFAC class translation factor GTPase superfamily. Classic translation factor GTPase family. IF-2 subfamily.

It is found in the cytoplasm. In terms of biological role, one of the essential components for the initiation of protein synthesis. Protects formylmethionyl-tRNA from spontaneous hydrolysis and promotes its binding to the 30S ribosomal subunits. Also involved in the hydrolysis of GTP during the formation of the 70S ribosomal complex. The sequence is that of Translation initiation factor IF-2 from Rhodopseudomonas palustris (strain BisA53).